We begin with the raw amino-acid sequence, 651 residues long: MSGVRAVRISIESACEKQVHEVGLDGTETYLPPLSMSQNLARLAQRIDFSQGSGSEEEEAAGTEGDAQEWPGAGSSADQDDEEGVVKFQPSLWPWDSVRNNLRSALTEMCVLYDVLSIVRDKKFMTLDPVSQDALPPKQNPQTLQLISKKKSLAGAAQILLKGAERLTKSVTENQENKLQRDFNSELLRLRQHWKLRKVGDKILGDLSYRSAGSLFPHHGTFEVIKNTDLDLDKKIPEDYCPLDVQIPSDLEGSAYIKVSIQKQAPDIGDLGTVNLFKRPLPKSKPGSPHWQTKLEAAQNVLLCKEIFAQLSREAVQIKSQVPHIVVKNQIISQPFPSLQLSISLCHSSNDKKSQKFATEKQCPEDHLYVLEHNLHLLIREFHKQTLSSIMMPHPASAPFGHKRMRLSGPQAFDKNEINSLQSSEGLLEKIIKQAKHIFLRSRAAATIDSLASRIEDPQIQAHWSNINDVYESSVKVLITSQGYEQICKSIQLQLNIGVEQIRVVHRDGRVITLSYQEQELQDFLLSQMSQHQVHAVQQLAKVMGWQVLSFSNHVGLGPIESIGNASAITVASPSGDYAISVRNGPESGSKIMVQFPRNQCKDLPKSDVLQDNKWSHLRGPFKEVQWNKMEGRNFVYKMELLMSALSPCLL.

Residues 51–83 form a disordered region; it reads QGSGSEEEEAAGTEGDAQEWPGAGSSADQDDEE.

The protein belongs to the Mediator complex subunit 17 family. As to quaternary structure, interacts with GATA1 and PPARG. Component of the Mediator complex, which is composed of MED1, MED4, MED6, MED7, MED8, MED9, MED10, MED11, MED12, MED13, MED13L, MED14, MED15, MED16, MED17, MED18, MED19, MED20, MED21, MED22, MED23, MED24, MED25, MED26, MED27, MED29, MED30, MED31, CCNC, CDK8 and CDC2L6/CDK11. The MED12, MED13, CCNC and CDK8 subunits form a distinct module termed the CDK8 module. Mediator containing the CDK8 module is less active than Mediator lacking this module in supporting transcriptional activation. Individual preparations of the Mediator complex lacking one or more distinct subunits have been variously termed ARC, CRSP, DRIP, PC2, SMCC and TRAP. Interacts with STAT2. In terms of tissue distribution, ubiquitous.

It is found in the nucleus. Functionally, component of the Mediator complex, a coactivator involved in the regulated transcription of nearly all RNA polymerase II-dependent genes. Mediator functions as a bridge to convey information from gene-specific regulatory proteins to the basal RNA polymerase II transcription machinery. Mediator is recruited to promoters by direct interactions with regulatory proteins and serves as a scaffold for the assembly of a functional preinitiation complex with RNA polymerase II and the general transcription factors. The chain is Mediator of RNA polymerase II transcription subunit 17 (MED17) from Homo sapiens (Human).